We begin with the raw amino-acid sequence, 330 residues long: 5'-AMP-activated protein kinase subunit gamma-1 (330 aa).

The interval 1–24 (MEAVPSSDSYPAVENEHLQETPES) is disordered. 3 consecutive CBS domains span residues 43–103 (PTSS…KSAL), 125–187 (SFKP…PKPE), and 198–260 (IGTY…NLDV). Residues Arg-70, 85–90 (MLTITD), Val-130, 151–152 (HR), and Lys-170 contribute to the ADP site. Residues Arg-70, 85–90 (MLTITD), Val-130, His-151, 151–152 (HR), Lys-170, Thr-200, Ala-205, 226–227 (SA), and 242–245 (SKFD) each bind AMP. ATP is bound by residues Arg-70, 85-90 (MLTITD), Val-130, 151-152 (HR), Arg-152, and Lys-170. Residues 138 to 159 (LFDAVSSLIRNKIHRLPVIDPE) carry the AMPK pseudosubstrate motif. 242-245 (SKFD) provides a ligand contact to ADP. Position 242 to 245 (242 to 245 (SKFD)) interacts with ATP. The residue at position 261 (Ser-261) is a Phosphoserine; by ULK1. Residue Thr-263 is modified to Phosphothreonine; by ULK1. Position 269 (Arg-269) interacts with ADP. Residue Arg-269 coordinates AMP. Arg-269 provides a ligand contact to ATP. Ser-270 carries the post-translational modification Phosphoserine; by ULK1. The 58-residue stretch at 272-329 (YFEGVLKCYLHETLETIINRLVEAEVHRLVVVDENDVVKGIVSLSDILQALVLTGGEK) folds into the CBS 4 domain. Residues Leu-277 and 298–299 (HR) contribute to the ADP site. AMP-binding positions include Leu-277, His-298, 298–299 (HR), and 314–317 (SLSD). ATP-binding positions include Leu-277 and 298–299 (HR).

Belongs to the 5'-AMP-activated protein kinase gamma subunit family. In terms of assembly, AMPK is a heterotrimer of an alpha catalytic subunit (PRKAA1 or PRKAA2), a beta (PRKAB1 or PRKAB2) and a gamma non-catalytic subunits (PRKAG1, PRKAG2 or PRKAG3). Interacts with FNIP1 and FNIP2. Post-translationally, phosphorylated by ULK1 and ULK2; leading to negatively regulate AMPK activity and suggesting the existence of a regulatory feedback loop between ULK1, ULK2 and AMPK. In terms of processing, glycosylated; O-GlcNAcylated by OGT, promoting the AMP-activated protein kinase (AMPK) activity.

AMP/ATP-binding subunit of AMP-activated protein kinase (AMPK), an energy sensor protein kinase that plays a key role in regulating cellular energy metabolism. In response to reduction of intracellular ATP levels, AMPK activates energy-producing pathways and inhibits energy-consuming processes: inhibits protein, carbohydrate and lipid biosynthesis, as well as cell growth and proliferation. AMPK acts via direct phosphorylation of metabolic enzymes, and by longer-term effects via phosphorylation of transcription regulators. Also acts as a regulator of cellular polarity by remodeling the actin cytoskeleton; probably by indirectly activating myosin. Gamma non-catalytic subunit mediates binding to AMP, ADP and ATP, leading to activate or inhibit AMPK: AMP-binding results in allosteric activation of alpha catalytic subunit (PRKAA1 or PRKAA2) both by inducing phosphorylation and preventing dephosphorylation of catalytic subunits. ADP also stimulates phosphorylation, without stimulating already phosphorylated catalytic subunit. ATP promotes dephosphorylation of catalytic subunit, rendering the AMPK enzyme inactive. The chain is 5'-AMP-activated protein kinase subunit gamma-1 (PRKAG1) from Bos taurus (Bovine).